Reading from the N-terminus, the 381-residue chain is Curved DNA-binding protein (381 aa).

Ser8 is modified (phosphoserine). Thr362 is subject to Phosphothreonine. Residues 368–375 (KNKKKSKK) carry the Nuclear localization signal motif.

The protein belongs to the peptidase M24 family.

The protein localises to the nucleus. Its function is as follows. A non-essential protein that preferentially binds curved DNA. Binds non-curved DNA with a much lower affinity. The chain is Curved DNA-binding protein (cdb4) from Schizosaccharomyces pombe (strain 972 / ATCC 24843) (Fission yeast).